The following is a 133-amino-acid chain: Large ribosomal subunit protein bL21 (133 aa).

The interval 1-22 (MAEKPAAKPKAAAAKAEAKDQS) is disordered.

Belongs to the bacterial ribosomal protein bL21 family. Part of the 50S ribosomal subunit. Contacts protein L20.

In terms of biological role, this protein binds to 23S rRNA in the presence of protein L20. The chain is Large ribosomal subunit protein bL21 from Prochlorococcus marinus (strain MIT 9303).